We begin with the raw amino-acid sequence, 265 residues long: 3-methyl-2-oxobutanoate hydroxymethyltransferase (265 aa).

Mg(2+)-binding residues include Asp45 and Asp84. 3-methyl-2-oxobutanoate is bound by residues Asp45–Ser46, Asp84, and Lys112. Glu114 serves as a coordination point for Mg(2+). Residue Glu181 is the Proton acceptor of the active site.

It belongs to the PanB family. As to quaternary structure, homodecamer; pentamer of dimers. It depends on Mg(2+) as a cofactor.

Its subcellular location is the cytoplasm. It carries out the reaction 3-methyl-2-oxobutanoate + (6R)-5,10-methylene-5,6,7,8-tetrahydrofolate + H2O = 2-dehydropantoate + (6S)-5,6,7,8-tetrahydrofolate. Its pathway is cofactor biosynthesis; (R)-pantothenate biosynthesis; (R)-pantoate from 3-methyl-2-oxobutanoate: step 1/2. In terms of biological role, catalyzes the reversible reaction in which hydroxymethyl group from 5,10-methylenetetrahydrofolate is transferred onto alpha-ketoisovalerate to form ketopantoate. The protein is 3-methyl-2-oxobutanoate hydroxymethyltransferase of Yersinia pseudotuberculosis serotype O:1b (strain IP 31758).